The primary structure comprises 264 residues: Ribosomal protein L11 methyltransferase (264 aa).

Thr-116, Gly-137, Asp-159, and Asn-200 together coordinate S-adenosyl-L-methionine.

This sequence belongs to the methyltransferase superfamily. PrmA family.

Its subcellular location is the cytoplasm. The enzyme catalyses L-lysyl-[protein] + 3 S-adenosyl-L-methionine = N(6),N(6),N(6)-trimethyl-L-lysyl-[protein] + 3 S-adenosyl-L-homocysteine + 3 H(+). Functionally, methylates ribosomal protein L11. In Thermotoga maritima (strain ATCC 43589 / DSM 3109 / JCM 10099 / NBRC 100826 / MSB8), this protein is Ribosomal protein L11 methyltransferase.